We begin with the raw amino-acid sequence, 143 residues long: Large-conductance mechanosensitive channel (143 aa).

2 helical membrane-spanning segments follow: residues 10 to 30 and 89 to 109; these read FAVK…GAFS and GSFI…FLMV.

Belongs to the MscL family. Homopentamer.

It is found in the cell inner membrane. Functionally, channel that opens in response to stretch forces in the membrane lipid bilayer. May participate in the regulation of osmotic pressure changes within the cell. The sequence is that of Large-conductance mechanosensitive channel from Burkholderia vietnamiensis (strain G4 / LMG 22486) (Burkholderia cepacia (strain R1808)).